Consider the following 433-residue polypeptide: Glutamate-1-semialdehyde 2,1-aminomutase (433 aa).

Lys-267 bears the N6-(pyridoxal phosphate)lysine mark.

It belongs to the class-III pyridoxal-phosphate-dependent aminotransferase family. HemL subfamily. In terms of assembly, homodimer. Pyridoxal 5'-phosphate is required as a cofactor.

Its subcellular location is the cytoplasm. The enzyme catalyses (S)-4-amino-5-oxopentanoate = 5-aminolevulinate. Its pathway is porphyrin-containing compound metabolism; protoporphyrin-IX biosynthesis; 5-aminolevulinate from L-glutamyl-tRNA(Glu): step 2/2. This chain is Glutamate-1-semialdehyde 2,1-aminomutase, found in Syntrophobacter fumaroxidans (strain DSM 10017 / MPOB).